The following is a 431-amino-acid chain: 3-phosphoshikimate 1-carboxyvinyltransferase (431 aa).

K21, S22, and R26 together coordinate 3-phosphoshikimate. Residue K21 coordinates phosphoenolpyruvate. The phosphoenolpyruvate site is built by G93 and R121. 3-phosphoshikimate is bound by residues S166, Q168, S192, D317, and K344. Q168 lines the phosphoenolpyruvate pocket. Residue D317 is the Proton acceptor of the active site. Positions 348 and 390 each coordinate phosphoenolpyruvate.

The protein belongs to the EPSP synthase family. In terms of assembly, monomer.

It is found in the cytoplasm. The catalysed reaction is 3-phosphoshikimate + phosphoenolpyruvate = 5-O-(1-carboxyvinyl)-3-phosphoshikimate + phosphate. It participates in metabolic intermediate biosynthesis; chorismate biosynthesis; chorismate from D-erythrose 4-phosphate and phosphoenolpyruvate: step 6/7. Its function is as follows. Catalyzes the transfer of the enolpyruvyl moiety of phosphoenolpyruvate (PEP) to the 5-hydroxyl of shikimate-3-phosphate (S3P) to produce enolpyruvyl shikimate-3-phosphate and inorganic phosphate. This Herpetosiphon aurantiacus (strain ATCC 23779 / DSM 785 / 114-95) protein is 3-phosphoshikimate 1-carboxyvinyltransferase.